The sequence spans 144 residues: Deoxyuridine 5'-triphosphate nucleotidohydrolase (144 aa).

Substrate-binding positions include 63–65 (RSG), Asn76, and 80–82 (TID).

It belongs to the dUTPase family. It depends on Mg(2+) as a cofactor.

It carries out the reaction dUTP + H2O = dUMP + diphosphate + H(+). It functions in the pathway pyrimidine metabolism; dUMP biosynthesis; dUMP from dCTP (dUTP route): step 2/2. Its function is as follows. This enzyme is involved in nucleotide metabolism: it produces dUMP, the immediate precursor of thymidine nucleotides and it decreases the intracellular concentration of dUTP so that uracil cannot be incorporated into DNA. This chain is Deoxyuridine 5'-triphosphate nucleotidohydrolase, found in Porphyromonas gingivalis (strain ATCC 33277 / DSM 20709 / CIP 103683 / JCM 12257 / NCTC 11834 / 2561).